Here is a 416-residue protein sequence, read N- to C-terminus: Major facilitator superfamily domain-containing protein 3 (416 aa).

12 helical membrane-spanning segments follow: residues 10–30 (GLYLVQGLPYGLQSSLLPILL), 40–60 (VGLTKGLYAPWLLKLAWAPLV), 68–88 (VWLTFSTVCLGLVCGLLAVLP), 99–119 (TTVMGLLLLLNLGAAVQDVAL), 139–158 (QVVAYKLGSALAGGGLLVFF), 170–190 (LTATYWLAAALAWAAPALGRL), 204–224 (YLLQDLLAVPGTLWTAGFVLT), 252–272 (LWSGLGAATCSIAGSSLGGAL), 295–315 (LGGLACQTALLLHLNTPGASL), 324–344 (AALLSLCLQQFLGGVVTTATF), 365–385 (FLATLELLGKLLPGTLAGVLA), and 392–412 (LCFAAFLVLSALPVLDLRLAP).

This sequence belongs to the major facilitator superfamily.

It localises to the membrane. The protein is Major facilitator superfamily domain-containing protein 3 (Mfsd3) of Rattus norvegicus (Rat).